The sequence spans 301 residues: Ribosomal RNA small subunit methyltransferase H (301 aa).

S-adenosyl-L-methionine-binding positions include 35–37 (GGH), Asp-55, Phe-84, Asp-105, and Gln-112.

The protein belongs to the methyltransferase superfamily. RsmH family.

Its subcellular location is the cytoplasm. It carries out the reaction cytidine(1402) in 16S rRNA + S-adenosyl-L-methionine = N(4)-methylcytidine(1402) in 16S rRNA + S-adenosyl-L-homocysteine + H(+). Its function is as follows. Specifically methylates the N4 position of cytidine in position 1402 (C1402) of 16S rRNA. This Chloroflexus aurantiacus (strain ATCC 29366 / DSM 635 / J-10-fl) protein is Ribosomal RNA small subunit methyltransferase H.